The primary structure comprises 130 residues: Small ribosomal subunit protein uS11 (130 aa).

This sequence belongs to the universal ribosomal protein uS11 family. Part of the 30S ribosomal subunit. Interacts with proteins S7 and S18. Binds to IF-3.

Its function is as follows. Located on the platform of the 30S subunit, it bridges several disparate RNA helices of the 16S rRNA. Forms part of the Shine-Dalgarno cleft in the 70S ribosome. The sequence is that of Small ribosomal subunit protein uS11 from Prochlorococcus marinus (strain MIT 9515).